Consider the following 335-residue polypeptide: L-threo-3-deoxy-hexylosonate aldolase (335 aa).

Position 50-51 (50-51 (SN)) interacts with substrate. Residue Lys-175 is the Schiff-base intermediate with substrate of the active site.

This sequence belongs to the DapA family.

The enzyme catalyses 2-dehydro-3-deoxy-L-galactonate = L-glyceraldehyde + pyruvate. It participates in carbohydrate acid metabolism. Mediates the conversion of 2-dehydro-3-deoxy-L-galactonate to pyruvate and L-glyceraldehyde in D-galacturonate catabolic process. This Aspergillus niger protein is L-threo-3-deoxy-hexylosonate aldolase (gaaC).